Reading from the N-terminus, the 121-residue chain is UPF0344 protein BCG9842_B4136 (121 aa).

4 helical membrane passes run 6–26 (ITAW…YSAG), 38–58 (LMYI…VKTA), 65–85 (WYGL…MVLV), and 92–112 (PTGA…YLGL).

The protein belongs to the UPF0344 family.

It localises to the cell membrane. The sequence is that of UPF0344 protein BCG9842_B4136 from Bacillus cereus (strain G9842).